Reading from the N-terminus, the 480-residue chain is 6-phosphogluconate dehydrogenase, decarboxylating 1 (480 aa).

NADP(+) is bound by residues 10–15, 33–35, 77–79, and asparagine 105; these read GLAVMG, NRT, and VKA. Substrate-binding positions include asparagine 105 and 131 to 133; that span reads SGG. Catalysis depends on lysine 186, which acts as the Proton acceptor. 189–190 lines the substrate pocket; that stretch reads HN. The Proton donor role is filled by glutamate 193. Residues tyrosine 194, lysine 264, arginine 291, arginine 450, and histidine 456 each coordinate substrate.

Belongs to the 6-phosphogluconate dehydrogenase family. As to quaternary structure, homodimer. In terms of tissue distribution, highly expressed in inflorescence, lowly expressed in root and embryos and almost absent in leaves.

It localises to the cytoplasm. The catalysed reaction is 6-phospho-D-gluconate + NADP(+) = D-ribulose 5-phosphate + CO2 + NADPH. The protein operates within carbohydrate degradation; pentose phosphate pathway; D-ribulose 5-phosphate from D-glucose 6-phosphate (oxidative stage): step 3/3. In terms of biological role, catalyzes the oxidative decarboxylation of 6-phosphogluconate to ribulose 5-phosphate and CO(2), with concomitant reduction of NADP to NADPH. The sequence is that of 6-phosphogluconate dehydrogenase, decarboxylating 1 (G6PGH1) from Oryza sativa subsp. japonica (Rice).